The sequence spans 463 residues: Phosphomethylpyrimidine synthase (463 aa).

Substrate contacts are provided by residues Asn-80, Met-109, Tyr-138, His-173, 193–195, 234–237, and Glu-273; these read SRG and DGLR. His-277 contributes to the Zn(2+) binding site. Residue Tyr-300 participates in substrate binding. His-341 provides a ligand contact to Zn(2+). 3 residues coordinate [4Fe-4S] cluster: Cys-421, Cys-424, and Cys-429.

It belongs to the ThiC family. In terms of assembly, homodimer. The cofactor is [4Fe-4S] cluster.

The enzyme catalyses 5-amino-1-(5-phospho-beta-D-ribosyl)imidazole + S-adenosyl-L-methionine = 4-amino-2-methyl-5-(phosphooxymethyl)pyrimidine + CO + 5'-deoxyadenosine + formate + L-methionine + 3 H(+). The protein operates within cofactor biosynthesis; thiamine diphosphate biosynthesis. Catalyzes the synthesis of the hydroxymethylpyrimidine phosphate (HMP-P) moiety of thiamine from aminoimidazole ribotide (AIR) in a radical S-adenosyl-L-methionine (SAM)-dependent reaction. The polypeptide is Phosphomethylpyrimidine synthase (Anaeromyxobacter sp. (strain K)).